A 337-amino-acid polypeptide reads, in one-letter code: Cytoskeleton protein RodZ (337 aa).

At 1-111 the chain is on the cytoplasmic side; it reads MNTEATHDQN…LGKRRKKRDG (111 aa). One can recognise an HTH cro/C1-type domain in the interval 19-71; the sequence is LRNAREQLGLSQQAVAERLCLKVSTVRDIEEDKAPADLASTFLRGYIRSYARL. Positions 30–49 form a DNA-binding region, H-T-H motif; the sequence is QQAVAERLCLKVSTVRDIEE. Residues 112–132 traverse the membrane as a helical; Signal-anchor for type II membrane protein segment; the sequence is WLMTFTWLVLFVVIGLSGAWW. The Periplasmic segment spans residues 133 to 337; sequence WQDHKAQQEE…TLNAEQSPAQ (205 aa). Polar residues predominate over residues 145-167; the sequence is TMADQSSAELSSNSEQGQSVPLN. The tract at residues 145-218 is disordered; sequence TMADQSSAEL…AVVSPSQANV (74 aa). Residues 168–207 are compositionally biased toward low complexity; it reads TSTTTDPATTSTPPASVDTTATNTQTPAVTAPAPAVDPQQ. The segment covering 208–218 has biased composition (polar residues); that stretch reads NAVVSPSQANV.

It belongs to the RodZ family.

Its subcellular location is the cell inner membrane. Cytoskeletal protein that is involved in cell-shape control through regulation of the length of the long axis. The chain is Cytoskeleton protein RodZ from Shigella dysenteriae serotype 1 (strain Sd197).